A 396-amino-acid polypeptide reads, in one-letter code: Ribose-phosphate pyrophosphokinase 1, chloroplastic (396 aa).

The N-terminal 36 residues, 1–36 (MPLSYSAAAAAAPSPLAARSRGLLRRPPRSSPVVVR), are a transit peptide targeting the chloroplast. Asp204, His206, Asp215, and Asp219 together coordinate Mg(2+). The tract at residues 290 to 305 (GKVAVMMDDMIDTAGT) is binding of phosphoribosylpyrophosphate.

It belongs to the ribose-phosphate pyrophosphokinase family. Requires Mg(2+) as cofactor.

It is found in the plastid. The protein resides in the chloroplast. The enzyme catalyses D-ribose 5-phosphate + ATP = 5-phospho-alpha-D-ribose 1-diphosphate + AMP + H(+). The polypeptide is Ribose-phosphate pyrophosphokinase 1, chloroplastic (Oryza sativa subsp. japonica (Rice)).